The primary structure comprises 438 residues: Thymidine phosphorylase (438 aa).

The protein belongs to the thymidine/pyrimidine-nucleoside phosphorylase family. In terms of assembly, homodimer.

It catalyses the reaction thymidine + phosphate = 2-deoxy-alpha-D-ribose 1-phosphate + thymine. The protein operates within pyrimidine metabolism; dTMP biosynthesis via salvage pathway; dTMP from thymine: step 1/2. Functionally, the enzymes which catalyze the reversible phosphorolysis of pyrimidine nucleosides are involved in the degradation of these compounds and in their utilization as carbon and energy sources, or in the rescue of pyrimidine bases for nucleotide synthesis. The protein is Thymidine phosphorylase of Sinorhizobium medicae (strain WSM419) (Ensifer medicae).